We begin with the raw amino-acid sequence, 475 residues long: Ribulose bisphosphate carboxylase large chain (475 aa).

Positions 1–2 (MS) are excised as a propeptide. Pro3 carries the N-acetylproline modification. Lys14 carries the post-translational modification N6,N6,N6-trimethyllysine. Asn123 and Thr173 together coordinate substrate. The active-site Proton acceptor is Lys175. Residue Lys177 participates in substrate binding. Lys201, Asp203, and Glu204 together coordinate Mg(2+). N6-carboxylysine is present on Lys201. The active-site Proton acceptor is the His294. 3 residues coordinate substrate: Arg295, His327, and Ser379.

The protein belongs to the RuBisCO large chain family. Type I subfamily. Heterohexadecamer of 8 large chains and 8 small chains; disulfide-linked. The disulfide link is formed within the large subunit homodimers. Mg(2+) serves as cofactor. The disulfide bond which can form in the large chain dimeric partners within the hexadecamer appears to be associated with oxidative stress and protein turnover.

Its subcellular location is the plastid. It is found in the chloroplast. It catalyses the reaction 2 (2R)-3-phosphoglycerate + 2 H(+) = D-ribulose 1,5-bisphosphate + CO2 + H2O. It carries out the reaction D-ribulose 1,5-bisphosphate + O2 = 2-phosphoglycolate + (2R)-3-phosphoglycerate + 2 H(+). In terms of biological role, ruBisCO catalyzes two reactions: the carboxylation of D-ribulose 1,5-bisphosphate, the primary event in carbon dioxide fixation, as well as the oxidative fragmentation of the pentose substrate in the photorespiration process. Both reactions occur simultaneously and in competition at the same active site. This chain is Ribulose bisphosphate carboxylase large chain, found in Clarkia xantiana (Gunsight clarkia).